The primary structure comprises 479 residues: F-box protein SKIP17 (479 aa).

The F-box domain occupies 92–138 (NSNSWSLPPELTIKVFSMLDTKSMMQAAVCCTMFNKCAMDRLCYSHI). The segment at 435–479 (EMMEAEDDEVDEEDDSDDDTDDVSDEDESENDDDMGMGFDVDYLL) is disordered. Residues 437-469 (MEAEDDEVDEEDDSDDDTDDVSDEDESENDDDM) show a composition bias toward acidic residues.

In terms of assembly, part of a SCF (ASK-cullin-F-box) protein ligase complex. Interacts with SPK1B/ASK2.

It localises to the nucleus. The protein operates within protein modification; protein ubiquitination. Functionally, component of SCF(ASK-cullin-F-box) E3 ubiquitin ligase complexes, which may mediate the ubiquitination and subsequent proteasomal degradation of target proteins. The polypeptide is F-box protein SKIP17 (SKIP17) (Arabidopsis thaliana (Mouse-ear cress)).